Consider the following 215-residue polypeptide: 25 kDa ookinete surface antigen (215 aa).

A signal peptide spans 1 to 16 (MNMSYLFFFFFIQLVL). Residues 29 to 58 (CKDGFLIQMSNHFECNCNPGFVLTSESTCE) enclose the EGF-like 1; truncated domain. EGF-like domains lie at 59–104 (NKVE…SICV), 104–148 (VPNE…NTCT), and 151–191 (GQTE…NACI). Cystine bridges form between C63/C78, C72/C90, C92/C103, C108/C118, C113/C131, C133/C147, C155/C166, C159/C175, and C177/C190. 2 N-linked (GlcNAc...) asparagine glycosylation sites follow: N144 and N163. A lipid anchor (GPI-anchor amidated serine) is attached at S192. Positions 193–215 (FSLFNILNLSIIFIISLIYFYII) are cleaved as a propeptide — removed in mature form. Residue N200 is glycosylated (N-linked (GlcNAc...) asparagine).

The protein resides in the cell membrane. In Plasmodium gallinaceum, this protein is 25 kDa ookinete surface antigen.